The sequence spans 411 residues: Putative BMP-2-inducible kinase-like protein (411 aa).

Disordered regions lie at residues 1–87 (MIAP…TQDI), 215–280 (SQQQ…RVSQ), and 392–411 (QQSQ…PSKQ). Composition is skewed to basic and acidic residues over residues 8–18 (SSEEEGQKDEE) and 53–68 (EKRS…KAKY). A coiled-coil region spans residues 47–71 (EDEEEEEKRSSDSDYEQAKAKYSDM). Basic residues-rich tracts occupy residues 220-234 (VKQR…RQRR) and 243-258 (NGKR…KKTL).

The polypeptide is Putative BMP-2-inducible kinase-like protein (BMP2KL) (Homo sapiens (Human)).